The sequence spans 853 residues: MSAIENFDAHTPMMQQYLKLKAQHPEILLFYRMGDFYELFYDDAKRASQLLDISLTKRGASAGEPIPMAGIPYHAVENYLAKLVNQGESVAICEQIGDPATSKGPVERKVVRIVTPGTISDEALLQERQDNLLAAIWQDSKGFGYATLDISSGRFRLSEPADRETMAAELQRTNPAELLYAEDFAEMSLIEGRRGLRRRPLWEFEIDTARQQLNLQFGTRDLVGFGVENAPRGLCAAGCLLQYAKDTQRTTLPHIRSITMEREQDSIIMDAATRRNLEITQNLAGGAENTLASVLDCTVTPMGSRMLKRWLHMPVRDTRVLLERQQTIGALQDFTAGLQPVLRQVGDLERILARLALRTARPRDLARMRHAFQQLPELRAQLETVDSAPVQALREKMGEFAELRDLLERAIIDTPPVLVRDGGVIASGYNEELDEWRALADGATDYLERLEVRERERTGLDTLKVGFNAVHGYYIQISRGQSHLAPINYMRRQTLKNAERYIIPELKEYEDKVLTSKGKALALEKQLYEELFDLLLPHLEALQQSASALAELDVLVNLAERAYTLNYTCPTFIDKQGIRITEGRHPVVERVLNEPFIANPLNLSPQRRMLIITGPNMGGKSTYMRQTALIALMAYIGSYVPAQKVEIGPIDRIFTRVGAADDLASGRSTFMVEMTETANILHNATEYSLVLMDEIGRGTSTYDGLSLAWACAENLANKIKALTLFATHYFELTQLPEKMEGIANVHLDALEHGDTIAFMHSVQDGAASKSYGLAVAALAGVPKEVIKRARQKLRELENISPNAAATQVDGTQMSLLSVPEETSPAVEALENLDPDSLTPRQALEWIYRLKSLV.

614-621 (GPNMGGKS) serves as a coordination point for ATP.

It belongs to the DNA mismatch repair MutS family.

This protein is involved in the repair of mismatches in DNA. It is possible that it carries out the mismatch recognition step. This protein has a weak ATPase activity. The chain is DNA mismatch repair protein MutS from Shigella dysenteriae serotype 1 (strain Sd197).